The following is a 556-amino-acid chain: Formate--tetrahydrofolate ligase (556 aa).

65–72 contributes to the ATP binding site; that stretch reads TPAGEGKT.

The protein belongs to the formate--tetrahydrofolate ligase family.

It catalyses the reaction (6S)-5,6,7,8-tetrahydrofolate + formate + ATP = (6R)-10-formyltetrahydrofolate + ADP + phosphate. It participates in one-carbon metabolism; tetrahydrofolate interconversion. The polypeptide is Formate--tetrahydrofolate ligase (Carboxydothermus hydrogenoformans (strain ATCC BAA-161 / DSM 6008 / Z-2901)).